A 331-amino-acid polypeptide reads, in one-letter code: ATP-dependent 6-phosphofructokinase (331 aa).

An ATP-binding site is contributed by glycine 12. ADP contacts are provided by residues 22–26 (RGVVR) and 55–60 (RYSVSD). ATP is bound by residues 73–74 (RF) and 103–106 (GDGS). A Mg(2+)-binding site is contributed by aspartate 104. 127–129 (TID) contributes to the substrate binding site. The active-site Proton acceptor is aspartate 129. ADP is bound at residue arginine 156. Residues arginine 164 and 171-173 (MGR) each bind substrate. ADP contacts are provided by residues 187–189 (GCE), lysine 213, and 215–217 (KKH). Substrate contacts are provided by residues glutamate 224, arginine 245, and 251 to 254 (HIQR).

Belongs to the phosphofructokinase type A (PFKA) family. ATP-dependent PFK group I subfamily. Prokaryotic clade 'B1' sub-subfamily. Homotetramer. The cofactor is Mg(2+).

The protein localises to the cytoplasm. The catalysed reaction is beta-D-fructose 6-phosphate + ATP = beta-D-fructose 1,6-bisphosphate + ADP + H(+). The protein operates within carbohydrate degradation; glycolysis; D-glyceraldehyde 3-phosphate and glycerone phosphate from D-glucose: step 3/4. Allosterically activated by ADP and other diphosphonucleosides, and allosterically inhibited by phosphoenolpyruvate. Catalyzes the phosphorylation of D-fructose 6-phosphate to fructose 1,6-bisphosphate by ATP, the first committing step of glycolysis. The sequence is that of ATP-dependent 6-phosphofructokinase from Yersinia enterocolitica serotype O:8 / biotype 1B (strain NCTC 13174 / 8081).